A 193-amino-acid polypeptide reads, in one-letter code: Penicillin-binding protein activator LpoB (193 aa).

Positions 1–16 (MKKYLGVILAALVLTG) are cleaved as a signal peptide. Residue Cys17 is the site of N-palmitoyl cysteine attachment. The S-diacylglycerol cysteine moiety is linked to residue Cys17. The disordered stretch occupies residues 17 to 55 (CPSRPPEPTEPPATIEPVEPQVPTTPTLPPGESVPQPPK). Over residues 28-41 (PATIEPVEPQVPTT) the composition is skewed to low complexity.

Belongs to the LpoB family. In terms of assembly, interacts with PBP1b.

The protein resides in the cell outer membrane. Functionally, regulator of peptidoglycan synthesis that is essential for the function of penicillin-binding protein 1B (PBP1b). This chain is Penicillin-binding protein activator LpoB, found in Pectobacterium carotovorum subsp. carotovorum (strain PC1).